The following is a 479-amino-acid chain: Replication factor C large subunit (479 aa).

50–57 (GPPGSGKT) is an ATP binding site. Residues 420–468 (EKIRKERKEEEKVEVREEKPEEKVEEKREERETKKEKEKKEEKKAEKKG) are compositionally biased toward basic and acidic residues. Positions 420–479 (EKIRKERKEEEKVEVREEKPEEKVEEKREERETKKEKEKKEEKKAEKKGKQVTLFDFIKK) are disordered.

This sequence belongs to the activator 1 small subunits family. RfcL subfamily. In terms of assembly, heterohexamer composed of four small subunits (RfcS) and two large subunits (RfcL).

In terms of biological role, part of the RFC clamp loader complex which loads the PCNA sliding clamp onto DNA. The complex possesses DNA-independent ATPase activity. The polypeptide is Replication factor C large subunit (rfcL) (Pyrococcus abyssi (strain GE5 / Orsay)).